The primary structure comprises 209 residues: Large ribosomal subunit protein uL3 (209 aa).

This sequence belongs to the universal ribosomal protein uL3 family. As to quaternary structure, part of the 50S ribosomal subunit. Forms a cluster with proteins L14 and L19.

In terms of biological role, one of the primary rRNA binding proteins, it binds directly near the 3'-end of the 23S rRNA, where it nucleates assembly of the 50S subunit. The sequence is that of Large ribosomal subunit protein uL3 from Clostridium tetani (strain Massachusetts / E88).